The sequence spans 137 residues: Protein Flattop homolog (137 aa).

This sequence belongs to the Flattop family.

The protein localises to the cytoplasm. Its subcellular location is the cytoskeleton. It localises to the flagellum axoneme. Microtubule inner protein (MIP) part of the dynein-decorated doublet microtubules (DMTs) in cilia axoneme. Acts as a regulator of cilium basal body docking and positioning in mono- and multiciliated cells. Regulates basal body docking and cilia formation in multiciliated lung cells. Regulates kinocilium positioning and stereocilia bundle morphogenesis in the inner ear. The sequence is that of Protein Flattop homolog from Chlamydomonas reinhardtii (Chlamydomonas smithii).